Consider the following 119-residue polypeptide: Large ribosomal subunit protein eL31z (119 aa).

This sequence belongs to the eukaryotic ribosomal protein eL31 family.

The protein is Large ribosomal subunit protein eL31z (RPL31A) of Arabidopsis thaliana (Mouse-ear cress).